We begin with the raw amino-acid sequence, 67 residues long: Protein SlyX homolog (67 aa).

Residues 48–60 show a composition bias toward polar residues; the sequence is TSAPSTAAESNPQ. Residues 48-67 form a disordered region; sequence TSAPSTAAESNPQHEIPPHY.

The protein belongs to the SlyX family.

The sequence is that of Protein SlyX homolog from Cupriavidus pinatubonensis (strain JMP 134 / LMG 1197) (Cupriavidus necator (strain JMP 134)).